Consider the following 120-residue polypeptide: Proteinase inhibitor (120 aa).

The first 19 residues, 1–19, serve as a signal peptide directing secretion; that stretch reads MKQLIIATLLSALSGGCMA. The cysteines at positions 43 and 65 are disulfide-linked.

It belongs to the protease inhibitor I38 family. As to quaternary structure, monomer.

It is found in the periplasm. Its function is as follows. Inhibitor of the extracellular proteases A, B, and C of E.chrysanthemi and the S.marcescens 50 kDa extracellular protease. It forms a non-covalent bond with the proteases and may prevent autocatalytic cleavage of the proteases zymogen in the periplasm. In Dickeya chrysanthemi (Pectobacterium chrysanthemi), this protein is Proteinase inhibitor (inh).